The following is a 297-amino-acid chain: uncharacterized protein (297 aa).

Residues 46-229 form a disordered region; that stretch reads LGAGGPPPPP…RPPPYIAPPP (184 aa). Over residues 65 to 81 the composition is skewed to pro residues; the sequence is PEGPGGPPQHAPPNPPP. Residues 90–100 show a composition bias toward gly residues; it reads RGGGAGGAGDG. Over residues 106 to 117 the composition is skewed to acidic residues; it reads DAAEEYGPEDLD. Residues 137 to 151 are compositionally biased toward basic residues; sequence HQTRGPGRRAKKRLR. Residues 184–201 show a composition bias toward low complexity; that stretch reads ATPQAAPAAKTTPASPQT. A compositionally biased stretch (pro residues) spans 219 to 229; it reads HRPPPYIAPPP.

This is an uncharacterized protein from Torque teno virus (isolate Human/China/CT23F/2001) (TTV).